An 88-amino-acid polypeptide reads, in one-letter code: Putative membrane protein insertion efficiency factor (88 aa).

It belongs to the UPF0161 family.

It is found in the cell inner membrane. Functionally, could be involved in insertion of integral membrane proteins into the membrane. This chain is Putative membrane protein insertion efficiency factor, found in Coxiella burnetii (strain Dugway 5J108-111).